The chain runs to 489 residues: WRKY transcription factor 72B (489 aa).

Disordered regions lie at residues 1–100, 131–159, and 234–267; these read MENK…EMRE, QKET…QEAD, and DENE…RARV. Composition is skewed to basic and acidic residues over residues 32–52 and 83–100; these read GRKE…KDYM and THKE…EMRE. A coiled-coil region spans residues 84 to 132; it reads HKEQDDQLASAKDEMREVMEENQRLRMHLDRMMKEYRNLQNQFHDIVQK. The segment covering 138 to 147 has biased composition (low complexity); that stretch reads SSSTTVNTST. Positions 273-339 form a DNA-binding region, WRKY; sequence CDAPTMNDGC…YEGTHNHTLP (67 aa). 2 disordered regions span residues 356–381 and 427–454; these read LLSG…PTTT and TSTS…YNYN. Composition is skewed to low complexity over residues 371-381 and 427-438; these read TATTTTTPTTT and TSTSSSSPSSLS.

Belongs to the WRKY group II-b family.

Its subcellular location is the nucleus. Its function is as follows. In association with WRKY72A, contributes to basal defense against root-knot nematodes (RKNs) and potato aphids, as well as Mi-1-mediated gene-for-gene resistance to these pests. Both WRKY72A and WRKY72B are not required for gene-for-gene resistance mediated by Pto, another tomato R gene. The protein is WRKY transcription factor 72B of Solanum lycopersicum (Tomato).